The primary structure comprises 226 residues: Protein FMP52-1, mitochondrial (226 aa).

Residues 1-43 (MSAFVLGSTGLVGLQILKVLDSSTAFKKVSTVSRRLPSVTSGK) constitute a mitochondrion transit peptide.

This sequence belongs to the FMP52 family.

The protein resides in the mitochondrion outer membrane. This chain is Protein FMP52-1, mitochondrial (FMP521), found in Scheffersomyces stipitis (strain ATCC 58785 / CBS 6054 / NBRC 10063 / NRRL Y-11545) (Yeast).